Here is a 419-residue protein sequence, read N- to C-terminus: Glutamyl-tRNA reductase (419 aa).

Substrate is bound by residues 49–52 (TCNR), Ser107, 112–114 (EPQ), and Gln118. Residue Cys50 is the Nucleophile of the active site. Residue 187–192 (GAGETI) coordinates NADP(+).

It belongs to the glutamyl-tRNA reductase family. Homodimer.

It catalyses the reaction (S)-4-amino-5-oxopentanoate + tRNA(Glu) + NADP(+) = L-glutamyl-tRNA(Glu) + NADPH + H(+). Its pathway is porphyrin-containing compound metabolism; protoporphyrin-IX biosynthesis; 5-aminolevulinate from L-glutamyl-tRNA(Glu): step 1/2. Its function is as follows. Catalyzes the NADPH-dependent reduction of glutamyl-tRNA(Glu) to glutamate 1-semialdehyde (GSA). This chain is Glutamyl-tRNA reductase, found in Vibrio vulnificus (strain CMCP6).